Reading from the N-terminus, the 305-residue chain is uncharacterized protein (305 aa).

One can recognise an ABC transporter domain in the interval 5-233; sequence LELKNVTKNI…ENDTYFFQVE (229 aa). ATP is bound at residue 37–44; it reads GPNGAGKT.

It belongs to the ABC transporter superfamily.

This is an uncharacterized protein from Bacillus subtilis (strain 168).